The chain runs to 936 residues: Calcium homeostasis endoplasmic reticulum protein (936 aa).

At methionine 1 the chain carries N-acetylmethionine. Residues 15–57 (VIDKLAQFVARNGPEFEKMTMEKQKDNPKFSFLFGGEFYSYYK) form an SURP motif repeat. Lysine 18 is modified (N6-acetyllysine). The interval 77-102 (EPTSAMPPLPQPPLAPTASLTPAQGT) is disordered. A compositionally biased stretch (pro residues) spans 81 to 91 (AMPPLPQPPLA). Positions 149–289 (ETQLDMSEFD…QLQSPALGLG (141 aa)) constitute a CID domain. The segment at 328-646 (LAQQQQQQQQ…RQGPPHINHD (319 aa)) is disordered. The span at 330-355 (QQQQQQQQQQQQQPQPQPQPQIQLPQ) shows a compositional bias: low complexity. Over residues 363–383 (TPPPPAPPPASAPAPTIPPTT) the composition is skewed to pro residues. A compositionally biased stretch (polar residues) spans 395 to 405 (PGSSEYDTSAG). The span at 488-500 (PWNNQPDPNWNNQ) shows a compositional bias: low complexity. The segment covering 534–550 (PFPPHQQHPQFNQPPHP) has biased composition (pro residues). Residues 551–560 (HNFNRFPPRF) show a composition bias toward low complexity. Residues 561-572 (MQDDFPPRHPFE) show a composition bias toward basic and acidic residues. A compositionally biased stretch (basic residues) spans 594–603 (PHHHPGHRMP). Tyrosine 723 bears the Phosphotyrosine mark. Residues 731 to 887 (RARRRKGQEK…DPIKGGDVRD (157 aa)) are disordered. The segment covering 748–758 (SRSRSKSRGRS) has biased composition (basic residues). Residues 759 to 773 (SSRSSSRSSKSSRSS) show a composition bias toward low complexity. Basic residues predominate over residues 774–824 (SRSHSRSRSRSSSRSRSRSRSRSRSSRSRSRSRSRSRSKSYSPGRRRRSRS). Phosphoserine occurs at positions 822, 824, and 826. Threonine 828 is subject to Phosphothreonine. At serine 837 the chain carries Phosphoserine. The G-patch domain occupies 850–900 (EENKGHQMLVKMGWSGSGGLGAKEQGIQDPIKGGDVRDKWDQYKGVGVALD). A Glycyl lysine isopeptide (Lys-Gly) (interchain with G-Cter in SUMO2) cross-link involves residue lysine 853. Phosphoserine is present on residues serine 864 and serine 866. Residue lysine 881 forms a Glycyl lysine isopeptide (Lys-Gly) (interchain with G-Cter in SUMO2) linkage. Lysine 888 carries the N6-acetyllysine modification. Phosphoserine is present on serine 913.

Its subcellular location is the cytoplasm. The protein resides in the perinuclear region. It localises to the endoplasmic reticulum. Functionally, involved in calcium homeostasis, growth and proliferation. The polypeptide is Calcium homeostasis endoplasmic reticulum protein (Mus musculus (Mouse)).